We begin with the raw amino-acid sequence, 206 residues long: ATP-dependent Clp protease proteolytic subunit (206 aa).

Catalysis depends on Ser-108, which acts as the Nucleophile. The active site involves His-133.

It belongs to the peptidase S14 family. As to quaternary structure, fourteen ClpP subunits assemble into 2 heptameric rings which stack back to back to give a disk-like structure with a central cavity, resembling the structure of eukaryotic proteasomes.

Its subcellular location is the cytoplasm. The enzyme catalyses Hydrolysis of proteins to small peptides in the presence of ATP and magnesium. alpha-casein is the usual test substrate. In the absence of ATP, only oligopeptides shorter than five residues are hydrolyzed (such as succinyl-Leu-Tyr-|-NHMec, and Leu-Tyr-Leu-|-Tyr-Trp, in which cleavage of the -Tyr-|-Leu- and -Tyr-|-Trp bonds also occurs).. Functionally, cleaves peptides in various proteins in a process that requires ATP hydrolysis. Has a chymotrypsin-like activity. Plays a major role in the degradation of misfolded proteins. This Chromohalobacter salexigens (strain ATCC BAA-138 / DSM 3043 / CIP 106854 / NCIMB 13768 / 1H11) protein is ATP-dependent Clp protease proteolytic subunit.